The chain runs to 81 residues: Acyl carrier protein (81 aa).

Residues 2 to 77 form the Carrier domain; that stretch reads ASIEERVVDI…EAIDFIEKEK (76 aa). The residue at position 37 (Ser37) is an O-(pantetheine 4'-phosphoryl)serine.

This sequence belongs to the acyl carrier protein (ACP) family. 4'-phosphopantetheine is transferred from CoA to a specific serine of apo-ACP by AcpS. This modification is essential for activity because fatty acids are bound in thioester linkage to the sulfhydryl of the prosthetic group.

Its subcellular location is the cytoplasm. It functions in the pathway lipid metabolism; fatty acid biosynthesis. Its function is as follows. Carrier of the growing fatty acid chain in fatty acid biosynthesis. The sequence is that of Acyl carrier protein from Rhodopirellula baltica (strain DSM 10527 / NCIMB 13988 / SH1).